The primary structure comprises 134 residues: MIMPQTRLDVADNSGARELMCIRVLNSGIGGKGLTKGGGGNKRYAHVGDIIVASVKDAAPRGAVKAGDVVKAVVVRTSHAIKRADGSTIRFDKNAAVIINNQGEPRGTRVFGPVARELRDRRFMKIVSLAPEVL.

It belongs to the universal ribosomal protein uL14 family. In terms of assembly, part of the 50S ribosomal subunit. Forms a cluster with proteins L3 and L19. In the 70S ribosome, L14 and L19 interact and together make contacts with the 16S rRNA in bridges B5 and B8.

Binds to 23S rRNA. Forms part of two intersubunit bridges in the 70S ribosome. The protein is Large ribosomal subunit protein uL14 of Deinococcus geothermalis (strain DSM 11300 / CIP 105573 / AG-3a).